The chain runs to 447 residues: Tubulin beta chain (447 aa).

Residues Gln-11, Glu-69, Ser-138, Gly-142, Thr-143, Gly-144, Asn-204, and Asn-226 each coordinate GTP. Glu-69 is a Mg(2+) binding site.

It belongs to the tubulin family. As to quaternary structure, dimer of alpha and beta chains. A typical microtubule is a hollow water-filled tube with an outer diameter of 25 nm and an inner diameter of 15 nM. Alpha-beta heterodimers associate head-to-tail to form protofilaments running lengthwise along the microtubule wall with the beta-tubulin subunit facing the microtubule plus end conferring a structural polarity. Microtubules usually have 13 protofilaments but different protofilament numbers can be found in some organisms and specialized cells. Mg(2+) serves as cofactor.

It localises to the cytoplasm. It is found in the cytoskeleton. Its function is as follows. Tubulin is the major constituent of microtubules, a cylinder consisting of laterally associated linear protofilaments composed of alpha- and beta-tubulin heterodimers. Microtubules grow by the addition of GTP-tubulin dimers to the microtubule end, where a stabilizing cap forms. Below the cap, tubulin dimers are in GDP-bound state, owing to GTPase activity of alpha-tubulin. The polypeptide is Tubulin beta chain (Trichophyton rubrum (Athlete's foot fungus)).